The sequence spans 320 residues: ATP-dependent 6-phosphofructokinase (320 aa).

ATP is bound at residue glycine 12. ADP-binding positions include 22–26 (RGVVR) and 55–60 (RYSVSD). Residues 73–74 (RF) and 103–106 (GDGS) contribute to the ATP site. A Mg(2+)-binding site is contributed by aspartate 104. Residue 126–128 (TID) coordinates substrate. Aspartate 128 (proton acceptor) is an active-site residue. An ADP-binding site is contributed by arginine 155. Residues arginine 163 and 170–172 (MGR) each bind substrate. Residues 186-188 (GCE), lysine 212, and 214-216 (KKH) contribute to the ADP site. Substrate is bound by residues glutamate 223, arginine 244, and 250-253 (HIQR).

It belongs to the phosphofructokinase type A (PFKA) family. ATP-dependent PFK group I subfamily. Prokaryotic clade 'B1' sub-subfamily. As to quaternary structure, homotetramer. The cofactor is Mg(2+).

The protein resides in the cytoplasm. It carries out the reaction beta-D-fructose 6-phosphate + ATP = beta-D-fructose 1,6-bisphosphate + ADP + H(+). It participates in carbohydrate degradation; glycolysis; D-glyceraldehyde 3-phosphate and glycerone phosphate from D-glucose: step 3/4. With respect to regulation, allosterically activated by ADP and other diphosphonucleosides, and allosterically inhibited by phosphoenolpyruvate. Its function is as follows. Catalyzes the phosphorylation of D-fructose 6-phosphate to fructose 1,6-bisphosphate by ATP, the first committing step of glycolysis. The sequence is that of ATP-dependent 6-phosphofructokinase from Buchnera aphidicola subsp. Baizongia pistaciae (strain Bp).